The sequence spans 59 residues: UPF0434 protein Pnec_0311 (59 aa).

Belongs to the UPF0434 family.

In Polynucleobacter necessarius subsp. necessarius (strain STIR1), this protein is UPF0434 protein Pnec_0311.